A 598-amino-acid polypeptide reads, in one-letter code: Aspartate--tRNA(Asp/Asn) ligase (598 aa).

Glu174 is a binding site for L-aspartate. Residues 198–201 form an aspartate region; that stretch reads QQLK. Arg220 serves as a coordination point for L-aspartate. Residues 220–222 and Gln229 contribute to the ATP site; that span reads RDE. Residue His458 participates in L-aspartate binding. An ATP-binding site is contributed by Glu492. Arg499 is an L-aspartate binding site. 544 to 547 is a binding site for ATP; that stretch reads GIDR.

Belongs to the class-II aminoacyl-tRNA synthetase family. Type 1 subfamily. Homodimer.

It localises to the cytoplasm. The catalysed reaction is tRNA(Asx) + L-aspartate + ATP = L-aspartyl-tRNA(Asx) + AMP + diphosphate. In terms of biological role, aspartyl-tRNA synthetase with relaxed tRNA specificity since it is able to aspartylate not only its cognate tRNA(Asp) but also tRNA(Asn). Reaction proceeds in two steps: L-aspartate is first activated by ATP to form Asp-AMP and then transferred to the acceptor end of tRNA(Asp/Asn). This Dehalococcoides mccartyi (strain ATCC BAA-2100 / JCM 16839 / KCTC 5957 / BAV1) protein is Aspartate--tRNA(Asp/Asn) ligase.